The sequence spans 283 residues: Gap junction beta-1 protein (283 aa).

Topologically, residues 1–22 (MNWTGLYTLLSGVNRHSTAIGR) are cytoplasmic. A helical transmembrane segment spans residues 23–45 (VWLSVIFIFRIMVLVVAAESVWG). Residues 46–75 (DEKSSFICNTLQPGCNSVCYDHFFPISHVR) lie on the Extracellular side of the membrane. The helical transmembrane segment at 76 to 95 (LWSLQLILVSTPALLVAMHV) threads the bilayer. Topologically, residues 96–130 (AHQQHIEKKMLRLEGHGDPLHLEEVKRHKVHISGT) are cytoplasmic. Residues 131–153 (LWWTYVISVVFRLLFEAVFMYVF) form a helical membrane-spanning segment. The Extracellular segment spans residues 154 to 191 (YLLYPGYAMVRLVKCEAFPCPNTVDCFVSRPTEKTVFT). A helical transmembrane segment spans residues 192-214 (VFMLAASGICIILNVAEVVYLII). At 215-283 (RACARRAQRR…AEKSDRCSAC (69 aa)) the chain is on the cytoplasmic side. 4 positions are modified to phosphoserine: serine 233, serine 258, serine 266, and serine 277.

This sequence belongs to the connexin family. Beta-type (group I) subfamily. In terms of assembly, a connexon is composed of a hexamer of connexins. Interacts with CNST.

The protein resides in the cell membrane. It is found in the cell junction. Its subcellular location is the gap junction. Functionally, one gap junction consists of a cluster of closely packed pairs of transmembrane channels, the connexons, through which materials of low MW diffuse from one cell to a neighboring cell. This chain is Gap junction beta-1 protein (Gjb1), found in Mus musculus (Mouse).